A 205-amino-acid chain; its full sequence is Imidazole glycerol phosphate synthase subunit HisH (205 aa).

Residues 1–205 form the Glutamine amidotransferase type-1 domain; that stretch reads MIALVDYGGG…FFKMALGDKK (205 aa). The Nucleophile role is filled by C79. Residues H181 and E183 contribute to the active site.

Heterodimer of HisH and HisF.

The protein localises to the cytoplasm. It carries out the reaction 5-[(5-phospho-1-deoxy-D-ribulos-1-ylimino)methylamino]-1-(5-phospho-beta-D-ribosyl)imidazole-4-carboxamide + L-glutamine = D-erythro-1-(imidazol-4-yl)glycerol 3-phosphate + 5-amino-1-(5-phospho-beta-D-ribosyl)imidazole-4-carboxamide + L-glutamate + H(+). The catalysed reaction is L-glutamine + H2O = L-glutamate + NH4(+). Its pathway is amino-acid biosynthesis; L-histidine biosynthesis; L-histidine from 5-phospho-alpha-D-ribose 1-diphosphate: step 5/9. Its function is as follows. IGPS catalyzes the conversion of PRFAR and glutamine to IGP, AICAR and glutamate. The HisH subunit catalyzes the hydrolysis of glutamine to glutamate and ammonia as part of the synthesis of IGP and AICAR. The resulting ammonia molecule is channeled to the active site of HisF. This Dehalococcoides mccartyi (strain ATCC BAA-2266 / KCTC 15142 / 195) (Dehalococcoides ethenogenes (strain 195)) protein is Imidazole glycerol phosphate synthase subunit HisH.